The following is a 423-amino-acid chain: COP9 signalosome complex subunit 3 (423 aa).

Alanine 2 bears the N-acetylalanine mark. The region spanning 197–365 is the PCI domain; sequence NFERALYFYE…GMVSFHDNPE (169 aa). Positions 402-423 are disordered; sequence QFVQKSMGSQEDDSGNKPSSYS. 3 positions are modified to phosphoserine: serine 407, serine 410, and serine 423.

It belongs to the CSN3 family. As to quaternary structure, component of the CSN complex, composed of COPS1/GPS1, COPS2, COPS3, COPS4, COPS5, COPS6, COPS7 (COPS7A or COPS7B), COPS8 and COPS9. In the complex, it probably interacts directly with COPS1, COPS4, COPS8 and COPS9. Interacts with CK2 and PKD. Interacts with the translation initiation factor EIF3S6 and IKBKG. Interacts with ERCC6.

It localises to the cytoplasm. Its subcellular location is the nucleus. Its function is as follows. Component of the COP9 signalosome complex (CSN), a complex involved in various cellular and developmental processes. The CSN complex is an essential regulator of the ubiquitin (Ubl) conjugation pathway by mediating the deneddylation of the cullin subunits of SCF-type E3 ligase complexes, leading to decrease the Ubl ligase activity of SCF-type complexes such as SCF, CSA or DDB2. The complex is also involved in phosphorylation of p53/TP53, c-jun/JUN, IkappaBalpha/NFKBIA, ITPK1 and IRF8/ICSBP, possibly via its association with CK2 and PKD kinases. CSN-dependent phosphorylation of TP53 and JUN promotes and protects degradation by the Ubl system, respectively. Essential to maintain the survival of epiblast cells and thus the development of the postimplantation embryo. The sequence is that of COP9 signalosome complex subunit 3 (Cops3) from Rattus norvegicus (Rat).